Here is a 113-residue protein sequence, read N- to C-terminus: uncharacterized protein (113 aa).

The next 2 helical transmembrane spans lie at 25-45 (FGFC…CFII) and 49-69 (FEVE…LSVW).

It localises to the host membrane. This is an uncharacterized protein from Spiroplasma citri (SpV1).